A 695-amino-acid polypeptide reads, in one-letter code: Tail-specific protease (695 aa).

Positions 1 to 29 are cleaved as a signal peptide; the sequence is MVMKFKMSKNVICYTWLSVCLSSAIPAFA. Residues 256–316 enclose the PDZ domain; sequence IGTTLQSEDD…RLEDLVEKIK (61 aa). Catalysis depends on charge relay system residues Ser-459, Asp-470, and Lys-484.

It belongs to the peptidase S41A family.

The protein resides in the cell inner membrane. The enzyme catalyses The enzyme shows specific recognition of a C-terminal tripeptide, Xaa-Yaa-Zaa, in which Xaa is preferably Ala or Leu, Yaa is preferably Ala or Tyr, and Zaa is preferably Ala, but then cleaves at a variable distance from the C-terminus. A typical cleavage is -Ala-Ala-|-Arg-Ala-Ala-Lys-Glu-Asn-Tyr-Ala-Leu-Ala-Ala.. In terms of biological role, involved in the cleavage of a C-terminal peptide of 11 residues from the precursor form of penicillin-binding protein 3 (PBP3). May be involved in protection of the bacterium from thermal and osmotic stresses. The chain is Tail-specific protease (prc) from Haemophilus influenzae (strain ATCC 51907 / DSM 11121 / KW20 / Rd).